Reading from the N-terminus, the 525-residue chain is MSELLNRRLSLLGANLPLLKQCLHGIERECLRVTDEGRLAQTPHPEALGSALTNEQITTDYSESLLEFITPALADPAKVLESLEETHRFVYSKLGDEYLWSPSMPCTLPAEEDIPIAEYGSSNIGKLKHVYRKGLALRYGRTMQCIAGIHYNFSLPEALWPLLREAEGSTENDRDYQSSAYIALIRNFRRYSWLLMYLFGASPALDKGFLRGRPHQLEELDAETLFLPYATSLRMSDLGYQSNAQAGLTPCYNNLASYTDSLRKAVGTPYPPYVEIGTHVDGEWVQLNTNILQIENEYYSNIRPKRVTYTGERPIQALTSRGVQYVEVRCLDINPFLPVGIDLTEARFLDAFLLFCALEDSPQLDNGECGQCTSNFLTVVKEGRRPGLELHRNGQPISLKDWASELIGRIRQLANLLDQAQGSDEHAKALDAQQAKVDDTSLTPSAQVLARMTEHDESFVQFSLRQSRVHAETFREQPLSNEKQQAFETLARESLARQSELEQNEVGDFDLFVGAYQASILAISS.

This sequence belongs to the glutamate--cysteine ligase type 1 family. Type 1 subfamily.

It carries out the reaction L-cysteine + L-glutamate + ATP = gamma-L-glutamyl-L-cysteine + ADP + phosphate + H(+). Its pathway is sulfur metabolism; glutathione biosynthesis; glutathione from L-cysteine and L-glutamate: step 1/2. This is Glutamate--cysteine ligase from Pseudomonas putida (strain ATCC 47054 / DSM 6125 / CFBP 8728 / NCIMB 11950 / KT2440).